A 555-amino-acid polypeptide reads, in one-letter code: WRKY transcription factor WRKY24 (555 aa).

2 disordered regions span residues 133–183 and 197–248; these read TAPA…AGAN and SEMA…CTFP. Residues 163–183 are compositionally biased toward low complexity; sequence QQQQQPWGYQQQPAGMDAGAN. A DNA-binding region (WRKY 1) is located at residues 214 to 278; that stretch reads SQRRSSDDGY…YKGTHNHAKP (65 aa). Positions 253 to 259 match the Nuclear localization signal motif; it reads KKKVERS. The segment at 270–365 is disordered; it reads KGTHNHAKPQ…DGEGISMAGN (96 aa). 2 stretches are compositionally biased toward polar residues: residues 277 to 294 and 310 to 320; these read KPQN…QVLQ and TAATPENSSAS. Positions 347-356 are enriched in basic and acidic residues; sequence DSKRWRKDGD. Residues 379–444 constitute a DNA-binding region (WRKY 2); the sequence is SDIDILDDGY…YEGKHNHDVP (66 aa). The interval 466–555 is transcription repression of gibberellic acid (GA)-induced promoters; it reads HPYLPNQPPP…DDMFFQNSLY (90 aa). The interval 514 to 555 is disordered; sequence FDDARGSYMSQHQQQQRQNDAMHASRAKEEPGDDMFFQNSLY.

The protein belongs to the WRKY group II-a family. Expressed in aleurone cells. Mostly expressed in aleurone layers and leaves, and, to a lower extent, in roots, panicles and embryos.

The protein resides in the nucleus. In terms of biological role, transcription activator. Interacts specifically with the W box (5'-(T)TGAC[CT]-3'), a frequently occurring elicitor-responsive cis-acting element. Negative regulator of both gibberellic acid (GA) and abscisic acid (ABA) signaling in aleurone cells, probably by interfering with GAM1, via the specific repression of GA- and ABA-induced promoters. This chain is WRKY transcription factor WRKY24, found in Oryza sativa subsp. japonica (Rice).